We begin with the raw amino-acid sequence, 654 residues long: Broad substrate specificity ATP-binding cassette transporter ABCG2 (654 aa).

Over 1–394 (MSSSNVEVFI…KNLLGNPQAS (394 aa)) the chain is Cytoplasmic. In terms of domain architecture, ABC transporter spans 37–286 (LSFHNICYRV…FESAGYHCEA (250 aa)). ATP is bound by residues 80-87 (GPTGGGKS), 184-190 (RGVSGGE), Glu211, and His243. The 263-residue stretch at 388–650 (LGNPQASIAQ…TIAYLKLLFL (263 aa)) folds into the ABC transmembrane type-2 domain. A helical transmembrane segment spans residues 395 to 415 (IAQIIVTVILGLVIGAIYFGL). Topologically, residues 416 to 427 (NNDSTGIQNRAG) are extracellular. N-linked (GlcNAc...) asparagine glycosylation is present at Asn417. A helical transmembrane segment spans residues 428 to 448 (VLFFLTTNQCFSSVSAVELFV). Residues 449–476 (VEKKLFIHEYISGYYRVSSYFFGKLLSD) lie on the Cytoplasmic side of the membrane. Residues 477-497 (LLPMRMLPSIIFTCIVYFMLG) form a helical membrane-spanning segment. Residues 498–505 (LKPTADAF) lie on the Extracellular side of the membrane. Residues 506-526 (FIMMFTLMMVAYSASSMALAI) form a helical membrane-spanning segment. Residues 527 to 534 (AAGQSVVS) are Cytoplasmic-facing. The chain crosses the membrane as a helical span at residues 535 to 555 (VATLLMTICFVFMMIFSGLLV). 3 N-linked (GlcNAc...) asparagine glycosylation sites follow: Asn556, Asn595, and Asn599. Residues 556–629 (NLTTIASWLS…LSPWGLWKNH (74 aa)) lie on the Extracellular side of the membrane. An intrachain disulfide couples Cys591 to Cys607. A helical transmembrane segment spans residues 630–650 (VALACMIVIFLTIAYLKLLFL). Residues 651–654 (KKYS) are Cytoplasmic-facing.

Belongs to the ABC transporter superfamily. ABCG family. Eye pigment precursor importer (TC 3.A.1.204) subfamily. In terms of assembly, homodimer; disulfide-linked. The minimal functional unit is a homodimer, but the major oligomeric form in plasma membrane is a homotetramer with possibility of higher order oligomerization up to homododecamers. Post-translationally, N-glycosylated. Glycosylation-deficient ABCG2 is normally expressed and functional. In terms of processing, phosphorylated. Phosphorylation may regulate the localization to the plasma membrane, the homooligomerization and therefore, the activity of the transporter.

Its subcellular location is the cell membrane. The protein localises to the apical cell membrane. The protein resides in the mitochondrion membrane. It catalyses the reaction ATP + H2O + xenobioticSide 1 = ADP + phosphate + xenobioticSide 2.. It carries out the reaction urate(in) + ATP + H2O = urate(out) + ADP + phosphate + H(+). The catalysed reaction is indoxyl sulfate(in) + ATP + H2O = indoxyl sulfate(out) + ADP + phosphate + H(+). The enzyme catalyses sphing-4-enine 1-phosphate(in) + ATP + H2O = sphing-4-enine 1-phosphate(out) + ADP + phosphate + H(+). It catalyses the reaction estrone 3-sulfate(in) + ATP + H2O = estrone 3-sulfate(out) + ADP + phosphate + H(+). It carries out the reaction dehydroepiandrosterone 3-sulfate(in) + ATP + H2O = dehydroepiandrosterone 3-sulfate(out) + ADP + phosphate + H(+). The catalysed reaction is 4-methylumbelliferone sulfate(in) + ATP + H2O = 4-methylumbelliferone sulfate(out) + ADP + phosphate + H(+). The enzyme catalyses 5,7-dimethyl-2-methylamino-4-(3-pyridylmethyl)-1,3-benzothiazol-6-yl beta-D-glucuronate(in) + ATP + H2O = 5,7-dimethyl-2-methylamino-4-(3-pyridylmethyl)-1,3-benzothiazol-6-yl beta-D-glucuronate(out) + ADP + phosphate + H(+). It catalyses the reaction 4-methylumbelliferone beta-D-glucuronate(in) + ATP + H2O = 4-methylumbelliferone beta-D-glucuronate(out) + ADP + phosphate + H(+). It carries out the reaction 5,7-dimethyl-2-methylamino-4-(3-pyridylmethyl)-1,3-benzothiazol-6-yl sulfate(in) + ATP + H2O = 5,7-dimethyl-2-methylamino-4-(3-pyridylmethyl)-1,3-benzothiazol-6-yl sulfate(out) + ADP + phosphate + H(+). The catalysed reaction is 17beta-estradiol 17-O-(beta-D-glucuronate)(in) + ATP + H2O = 17beta-estradiol 17-O-(beta-D-glucuronate)(out) + ADP + phosphate + H(+). The enzyme catalyses methotrexate(in) + ATP + H2O = methotrexate(out) + ADP + phosphate + H(+). It catalyses the reaction riboflavin(in) + ATP + H2O = riboflavin(out) + ADP + phosphate + H(+). It carries out the reaction pheophorbide a(in) + ATP + H2O = pheophorbide a(out) + ADP + phosphate + H(+). The catalysed reaction is itaconate(in) + ATP + H2O = itaconate(out) + ADP + phosphate + H(+). Broad substrate specificity ATP-dependent transporter of the ATP-binding cassette (ABC) family that actively extrudes a wide variety of physiological compounds, dietary toxins and xenobiotics from cells. Involved in porphyrin homeostasis, mediating the export of protoporphyrin IX (PPIX) from both mitochondria to cytosol and cytosol to extracellular space, it also functions in the cellular export of heme. Also mediates the efflux of sphingosine-1-P from cells. Acts as a urate exporter functioning in both renal and extrarenal urate excretion. In kidney, it also functions as a physiological exporter of the uremic toxin indoxyl sulfate. Also involved in the excretion of steroids like estrone 3-sulfate/E1S, 3beta-sulfooxy-androst-5-en-17-one/DHEAS, and other sulfate conjugates. Mediates the secretion of the riboflavin and biotin vitamins into milk. Extrudes pheophorbide a, a phototoxic porphyrin catabolite of chlorophyll, reducing its bioavailability. Plays an important role in the exclusion of xenobiotics from the brain. It confers to cells a resistance to multiple drugs and other xenobiotics including mitoxantrone, pheophorbide, camptothecin, methotrexate, azidothymidine, and the anthracyclines daunorubicin and doxorubicin, through the control of their efflux. In placenta, it limits the penetration of drugs from the maternal plasma into the fetus. May play a role in early stem cell self-renewal by blocking differentiation. In inflammatory macrophages, exports itaconate from the cytosol to the extracellular compartment and limits the activation of TFEB-dependent lysosome biogenesis involved in antibacterial innate immune response. This is Broad substrate specificity ATP-binding cassette transporter ABCG2 (ABCG2) from Macaca mulatta (Rhesus macaque).